A 222-amino-acid chain; its full sequence is Noggin (222 aa).

A signal peptide spans 1–19 (MDHSQCLVTIYALMVFLGL). N-linked (GlcNAc...) asparagine glycosylation is present at asparagine 61. Disulfide bonds link cysteine 145-cysteine 182, cysteine 168-cysteine 218, cysteine 174-cysteine 220, and cysteine 197-cysteine 205.

Belongs to the noggin family. In terms of assembly, homodimer.

The protein localises to the secreted. Functionally, patterns the embryo by interrupting bone morphogenetic proteins (BMP) signaling. Binds BMP-4 and BMP-2 with high affinity. Can abolish BMP-4 activity by blocking binding to cognate cell-surface receptors. Capable of inducing dorsal development in embryos. Causes dorsal mesodermal differentiation of animal cap ectoderm when coexpressed with xWNT-8 and nuclear, sequence-specific DNA-binding protein xBRA. None of these molecules causes dorsal mesoderm formation when expressed alone. The polypeptide is Noggin (nog) (Xenopus laevis (African clawed frog)).